Consider the following 260-residue polypeptide: Hydroxypyruvate/pyruvate aldolase Bphyt_0320 (260 aa).

Catalysis depends on histidine 48, which acts as the Proton acceptor. 2 residues coordinate a divalent metal cation: glutamate 157 and aspartate 183.

This sequence belongs to the HpcH/HpaI aldolase family. Requires Mn(2+) as cofactor. It depends on Mg(2+) as a cofactor. Co(2+) serves as cofactor.

It carries out the reaction D-glyceraldehyde + 3-hydroxypyruvate = 2-dehydro-D-gluconate. The enzyme catalyses D-glyceraldehyde + pyruvate = 2-dehydro-3-deoxy-L-galactonate. The catalysed reaction is 2-dehydro-3-deoxy-D-gluconate = D-glyceraldehyde + pyruvate. In terms of biological role, aldolase which can catalyze in vitro the aldolisation reaction between hydroxypyruvate (HPA) or pyruvate (PA) and D-glyceraldehyde (D-GA). The condensation of hydroxypyruvate and D-glyceraldehyde produces 2-dehydro-D-gluconate. The condensation of pyruvate and D-glyceraldehyde produces 2-dehydro-3-deoxy-L-galactonate as the major product and 2-dehydro-3-deoxy-D-gluconate. Also catalyzes the retro-aldol type decarboxylation of oxaloacetate, a general property of known pyruvate aldolases. The chain is Hydroxypyruvate/pyruvate aldolase Bphyt_0320 from Paraburkholderia phytofirmans (strain DSM 17436 / LMG 22146 / PsJN) (Burkholderia phytofirmans).